Reading from the N-terminus, the 315-residue chain is Cysteine proteinase 2 (315 aa).

The signal sequence occupies residues 1–13 (MFAFICLLAIASA). A propeptide spans 14–93 (IDFNTWASKN…NGQVKYLNIQ (80 aa)) (activation peptide). 2 disulfides stabilise this stretch: Cys115/Cys161 and Cys152/Cys193. Residue Cys118 is part of the active site. Catalysis depends on residues His259 and Asn279.

It belongs to the peptidase C1 family. In terms of assembly, interacts with cysteine protease inhibitor ICP1. Interacts with cysteine protease inhibitor ICP2.

Its subcellular location is the cell membrane. The protein resides in the cytoplasmic vesicle. It localises to the phagosome. It is found in the secreted. It catalyses the reaction Hydrolysis of proteins, including basement membrane collagen and azocasein. Preferential cleavage: Arg-Arg-|-Xaa in small molecule substrates including Z-Arg-Arg-|-NHMec.. Its activity is regulated as follows. Inhibited by cysteine protease inhibitors ICP1 and ICP2. Inhibited by leupeptin and such inhibitors of cysteine proteinases as L-transepoxysuccinyl-L-leucylamido-(4-guanidino)butane, peptidyldiazomethanes, iodoacetic acid and chicken cystatin. Functionally, cysteine protease which degrades matrix proteins such as collagen, laminin and fibronectin and thus is involved in the destruction of human tissue. Can abolish adhesion. May play an important role in pathogenicity. This Entamoeba histolytica (strain ATCC 30459 / HM-1:IMSS / ABRM) protein is Cysteine proteinase 2.